The following is a 67-amino-acid chain: Large ribosomal subunit protein eL24 (67 aa).

Zn(2+) is bound by residues cysteine 7, cysteine 10, cysteine 33, and cysteine 37. A C4-type zinc finger spans residues cysteine 7–cysteine 37. Over residues arginine 48–alanine 60 the composition is skewed to basic and acidic residues. A disordered region spans residues arginine 48 to alanine 67.

The protein belongs to the eukaryotic ribosomal protein eL24 family. As to quaternary structure, part of the 50S ribosomal subunit. Forms a cluster with proteins L3 and L14. Requires Zn(2+) as cofactor.

Its function is as follows. Binds to the 23S rRNA. The polypeptide is Large ribosomal subunit protein eL24 (rpl24e) (Haloarcula marismortui (strain ATCC 43049 / DSM 3752 / JCM 8966 / VKM B-1809) (Halobacterium marismortui)).